Reading from the N-terminus, the 666-residue chain is DNA-directed RNA polymerase subunit beta' (666 aa).

Zn(2+)-binding residues include Cys69, Cys71, Cys87, and Cys90. Asp489, Asp491, and Asp493 together coordinate Mg(2+).

It belongs to the RNA polymerase beta' chain family. RpoC1 subfamily. As to quaternary structure, in plastids the minimal PEP RNA polymerase catalytic core is composed of four subunits: alpha, beta, beta', and beta''. When a (nuclear-encoded) sigma factor is associated with the core the holoenzyme is formed, which can initiate transcription. Mg(2+) serves as cofactor. The cofactor is Zn(2+).

It is found in the plastid. The protein localises to the chloroplast. It carries out the reaction RNA(n) + a ribonucleoside 5'-triphosphate = RNA(n+1) + diphosphate. Its function is as follows. DNA-dependent RNA polymerase catalyzes the transcription of DNA into RNA using the four ribonucleoside triphosphates as substrates. In Chara vulgaris (Common stonewort), this protein is DNA-directed RNA polymerase subunit beta'.